We begin with the raw amino-acid sequence, 263 residues long: Proteasome subunit alpha type-1 (263 aa).

Residue methionine 1 is modified to N-acetylmethionine. Phosphoserine; alternate is present on serine 110. Residue serine 110 is glycosylated (O-linked (GlcNAc) serine; alternate). Lysine 115 participates in a covalent cross-link: Glycyl lysine isopeptide (Lys-Gly) (interchain with G-Cter in ubiquitin). Serine 177 is subject to Phosphoserine. Lysine 208 is covalently cross-linked (Glycyl lysine isopeptide (Lys-Gly) (interchain with G-Cter in ubiquitin)). The disordered stretch occupies residues 232 to 263 (FLEGLEERPQRKAQPAQPADEPAEKADEPMEH). The segment covering 253–263 (PAEKADEPMEH) has biased composition (basic and acidic residues).

This sequence belongs to the peptidase T1A family. The 26S proteasome consists of a 20S proteasome core and two 19S regulatory subunits. The 20S proteasome core is a barrel-shaped complex made of 28 subunits that are arranged in four stacked rings. The two outer rings are each formed by seven alpha subunits, and the two inner rings are formed by seven beta subunits. The proteolytic activity is exerted by three beta-subunits PSMB5, PSMB6 and PSMB7. Interacts with NOTCH3. Interacts with ZFAND1.

Its subcellular location is the cytoplasm. The protein resides in the nucleus. Component of the 20S core proteasome complex involved in the proteolytic degradation of most intracellular proteins. This complex plays numerous essential roles within the cell by associating with different regulatory particles. Associated with two 19S regulatory particles, forms the 26S proteasome and thus participates in the ATP-dependent degradation of ubiquitinated proteins. The 26S proteasome plays a key role in the maintenance of protein homeostasis by removing misfolded or damaged proteins that could impair cellular functions, and by removing proteins whose functions are no longer required. Associated with the PA200 or PA28, the 20S proteasome mediates ubiquitin-independent protein degradation. This type of proteolysis is required in several pathways including spermatogenesis (20S-PA200 complex) or generation of a subset of MHC class I-presented antigenic peptides (20S-PA28 complex). This Macaca fascicularis (Crab-eating macaque) protein is Proteasome subunit alpha type-1 (PSMA1).